The following is a 199-amino-acid chain: Imidazole glycerol phosphate synthase subunit HisH 2 (199 aa).

The 199-residue stretch at 1–199 folds into the Glutamine amidotransferase type-1 domain; it reads MIAVIDVSGN…NNFLSLESKC (199 aa). Cysteine 76 acts as the Nucleophile in catalysis. Catalysis depends on residues histidine 177 and glutamate 179.

As to quaternary structure, heterodimer of HisH and HisF.

It localises to the cytoplasm. It carries out the reaction 5-[(5-phospho-1-deoxy-D-ribulos-1-ylimino)methylamino]-1-(5-phospho-beta-D-ribosyl)imidazole-4-carboxamide + L-glutamine = D-erythro-1-(imidazol-4-yl)glycerol 3-phosphate + 5-amino-1-(5-phospho-beta-D-ribosyl)imidazole-4-carboxamide + L-glutamate + H(+). The enzyme catalyses L-glutamine + H2O = L-glutamate + NH4(+). It functions in the pathway amino-acid biosynthesis; L-histidine biosynthesis; L-histidine from 5-phospho-alpha-D-ribose 1-diphosphate: step 5/9. Functionally, IGPS catalyzes the conversion of PRFAR and glutamine to IGP, AICAR and glutamate. The HisH subunit provides the glutamine amidotransferase activity that produces the ammonia necessary to HisF for the synthesis of IGP and AICAR. This Legionella pneumophila (strain Lens) protein is Imidazole glycerol phosphate synthase subunit HisH 2.